Reading from the N-terminus, the 101-residue chain is Small ribosomal subunit protein uS14 (101 aa).

The protein belongs to the universal ribosomal protein uS14 family. Part of the 30S ribosomal subunit. Contacts proteins S3 and S10.

Functionally, binds 16S rRNA, required for the assembly of 30S particles and may also be responsible for determining the conformation of the 16S rRNA at the A site. This is Small ribosomal subunit protein uS14 from Arthrobacter sp. (strain FB24).